We begin with the raw amino-acid sequence, 447 residues long: Tubulin beta chain (447 aa).

Residues Gln11, Glu69, Ser138, Gly142, Thr143, Gly144, Asn204, and Asn226 each contribute to the GTP site. Mg(2+) is bound at residue Glu69. The disordered stretch occupies residues 424 to 447 (QYQEARSTDSDEYDNEEYYNQQEE). Acidic residues predominate over residues 433–447 (SDEYDNEEYYNQQEE).

Belongs to the tubulin family. Dimer of alpha and beta chains. A typical microtubule is a hollow water-filled tube with an outer diameter of 25 nm and an inner diameter of 15 nM. Alpha-beta heterodimers associate head-to-tail to form protofilaments running lengthwise along the microtubule wall with the beta-tubulin subunit facing the microtubule plus end conferring a structural polarity. Microtubules usually have 13 protofilaments but different protofilament numbers can be found in some organisms and specialized cells. The cofactor is Mg(2+). As to expression, lens specific.

The protein resides in the cytoplasm. The protein localises to the cytoskeleton. In terms of biological role, tubulin is the major constituent of microtubules, a cylinder consisting of laterally associated linear protofilaments composed of alpha- and beta-tubulin heterodimers. Microtubules grow by the addition of GTP-tubulin dimers to the microtubule end, where a stabilizing cap forms. Below the cap, tubulin dimers are in GDP-bound state, owing to GTPase activity of alpha-tubulin. This chain is Tubulin beta chain, found in Enteroctopus dofleini (North Pacific giant octopus).